Reading from the N-terminus, the 314-residue chain is Putative steroid dehydrogenase 1 (314 aa).

An NADP(+)-binding site is contributed by Ala47–Ile76. Tyr202 is a catalytic residue.

Belongs to the short-chain dehydrogenases/reductases (SDR) family. 17-beta-HSD 3 subfamily.

In Caenorhabditis elegans, this protein is Putative steroid dehydrogenase 1 (stdh-1).